Consider the following 196-residue polypeptide: Oplophorus-luciferin 2-monooxygenase catalytic subunit (196 aa).

Positions 1–27 (MAYSTLFIIALTAVVTQASSTQKSNLT) are cleaved as a signal peptide.

In terms of assembly, heterotetramer of a catalytic 19 kDa and a non-catalytic 35 kDa subunit.

Its subcellular location is the secreted. It catalyses the reaction coelenterazine + O2 = coelenteramide + hnu + CO2. With respect to regulation, inhibited by micromolar Cu(2+). Its function is as follows. Catalytic subunit of oplophorus-luciferin 2-monooxygenase. Oxidoreductase that converts coelenterazine (the oplophorus luciferin) to coelenteramide under emission of blue light with a maximum at 454 nm. Is also active with bisdeoxycoelenterazine. In Oplophorus gracilirostris (Luminous shrimp), this protein is Oplophorus-luciferin 2-monooxygenase catalytic subunit.